A 184-amino-acid polypeptide reads, in one-letter code: Probable N-acetyltransferase san (184 aa).

One can recognise an N-acetyltransferase domain in the interval 6–155 (IELGDVTPHN…DAHVLQKTLR (150 aa)). Y31 serves as a coordination point for substrate. N6-acetyllysine; by autocatalysis is present on K47. Y73 is a catalytic residue. Position 75 (M75) interacts with substrate. Residue 77 to 90 (LGCLSPYRRLGIGT) participates in acetyl-CoA binding. H112 is an active-site residue. 117–126 (NNGAIEFYKK) contributes to the CoA binding site. The substrate stretch occupies residues 138–141 (YYKR). The segment covering 157-174 (TAPNSNSTATSTTANSNS) has biased composition (low complexity). Residues 157–176 (TAPNSNSTATSTTANSNSRS) form a disordered region.

Belongs to the acetyltransferase family. In terms of assembly, component of an acetyltransferase complex, at least composed of san, Ard1 and Nat1. In terms of processing, autoacetylated.

The protein localises to the cytoplasm. The catalysed reaction is N-terminal L-methionyl-L-alanyl-[protein] + acetyl-CoA = N-terminal N(alpha)-acetyl-L-methionyl-L-alanyl-[protein] + CoA + H(+). It carries out the reaction N-terminal L-methionyl-L-seryl-[protein] + acetyl-CoA = N-terminal N(alpha)-acetyl-L-methionyl-L-seryl-[protein] + CoA + H(+). The enzyme catalyses N-terminal L-methionyl-L-valyl-[protein] + acetyl-CoA = N-terminal N(alpha)-acetyl-L-methionyl-L-valyl-[protein] + CoA + H(+). It catalyses the reaction N-terminal L-methionyl-L-threonyl-[protein] + acetyl-CoA = N-terminal N(alpha)-acetyl-L-methionyl-L-threonyl-[protein] + CoA + H(+). The catalysed reaction is N-terminal L-methionyl-L-lysyl-[protein] + acetyl-CoA = N-terminal N(alpha)-acetyl-L-methionyl-L-lysyl-[protein] + CoA + H(+). It carries out the reaction N-terminal L-methionyl-L-leucyl-[protein] + acetyl-CoA = N-terminal N(alpha)-acetyl-L-methionyl-L-leucyl-[protein] + CoA + H(+). The enzyme catalyses N-terminal L-methionyl-L-phenylalanyl-[protein] + acetyl-CoA = N-terminal N(alpha)-acetyl-L-methionyl-L-phenylalanyl-[protein] + CoA + H(+). It catalyses the reaction N-terminal L-methionyl-L-tyrosyl-[protein] + acetyl-CoA = N-terminal N(alpha)-acetyl-L-methionyl-L-tyrosyl-[protein] + CoA + H(+). N-alpha-acetyltransferase that acetylates the N-terminus of proteins that retain their initiating methionine. Has a broad substrate specificity: able to acetylate the initiator methionine of most peptides. Also displays N-epsilon-acetyltransferase activity by mediating acetylation of the side chain of specific lysines on proteins. Autoacetylates. Required for the establishment of sister chromatid cohesion and couple the processes of cohesion and DNA replication to ensure that only sister chromatids become paired together. Required for the interaction between Scc1/vtd and SMC3, possibly by mediating N-terminal acetylation of Scc1/vtd. In terms of biological role, (Microbial infection) Required for optimal replication of E.chaffeensis in the immune tissues, hemocytes, and fat body. In Drosophila melanogaster (Fruit fly), this protein is Probable N-acetyltransferase san (san).